Consider the following 244-residue polypeptide: Meiotic drive suppressor wtf2 (244 aa).

The span at 1–10 (MKNNYTSLKS) shows a compositional bias: polar residues. The interval 1 to 68 (MKNNYTSLKS…RENNPSRSTD (68 aa)) is disordered. Residues 17-30 (ELKTDHEIDLEKGP) show a composition bias toward basic and acidic residues. Transmembrane regions (helical) follow at residues 73–93 (FLIK…LAIC), 110–130 (WTLF…LTYF), 149–169 (WENM…VGSP), and 183–203 (LKWS…VFIA).

The protein belongs to the WTF family. As to quaternary structure, homomer. Interacts with other proteins that exhibit high sequence similarity.

Its subcellular location is the spore membrane. The protein localises to the vacuole membrane. Its function is as follows. Acts as a suppressor component of the dual wtf meiotic drive system, and can suppress but not confer meiotic drive by compatible poisons. Wtf meiotic drive systems promote unequal transmission of alleles from the parental zygote to progeny spores by encoding a poison and an antidote from the same locus; the poison is trans-acting and forms toxic aggregates in all spores within an ascus, wherease the antidote is spore-specific and targets aggregates for degradation by the vacuole. Meiotic drive by wtf systems therefore lead to poisoning of all progeny that do not inherit the dual poison/antidote allele, or express a compatible antidote. This is Meiotic drive suppressor wtf2 from Schizosaccharomyces kambucha (Fission yeast).